The chain runs to 223 residues: Ribose-5-phosphate isomerase A (223 aa).

Substrate contacts are provided by residues 28 to 31, 81 to 84, and 94 to 97; these read TGST, DGAD, and KGGG. The Proton acceptor role is filled by E103. K121 contacts substrate.

It belongs to the ribose 5-phosphate isomerase family. Homodimer.

The enzyme catalyses aldehydo-D-ribose 5-phosphate = D-ribulose 5-phosphate. Its pathway is carbohydrate degradation; pentose phosphate pathway; D-ribose 5-phosphate from D-ribulose 5-phosphate (non-oxidative stage): step 1/1. Its function is as follows. Catalyzes the reversible conversion of ribose-5-phosphate to ribulose 5-phosphate. This Herminiimonas arsenicoxydans protein is Ribose-5-phosphate isomerase A.